A 217-amino-acid polypeptide reads, in one-letter code: MAAGSRTSLLLAFGLLCLSWLQEGSAFPTIPLSRLFDNAMLRARRLYQLAYDTYQEFEEAYILKEQKYSFLQNPQTSLCFSESIPTPSNRVKTQQKSNLELLRISLLLIQSWLEPVQLLRSVFANSLVYGASDSNVYRHLKDLEEGIQTLMWRLEDGSPRTGQIFNQSYSKFDTKSHNDDALLKNYGLLYCFRKDMDKVETFLRIVQCRSVEGSCGF.

The signal sequence occupies residues 1 to 26 (MAAGSRTSLLLAFGLLCLSWLQEGSA). 2 cysteine pairs are disulfide-bonded: cysteine 79–cysteine 191 and cysteine 208–cysteine 215. At serine 132 the chain carries Phosphoserine. An N-linked (GlcNAc...) asparagine glycan is attached at asparagine 166. Serine 176 is subject to Phosphoserine.

It belongs to the somatotropin/prolactin family. Monomer, dimer, trimer, tetramer and pentamer, disulfide-linked or non-covalently associated, in homomeric and heteromeric combinations. Can also form a complex either with GHBP or with the alpha2-macroglobulin complex. In terms of tissue distribution, expressed in the placenta.

The protein localises to the secreted. Functionally, plays an important role in growth control. Its major role in stimulating body growth is to stimulate the liver and other tissues to secrete IGF1. It stimulates both the differentiation and proliferation of myoblasts. It also stimulates amino acid uptake and protein synthesis in muscle and other tissues. The chain is Growth hormone variant (GH2) from Homo sapiens (Human).